We begin with the raw amino-acid sequence, 546 residues long: Delta-1-pyrroline-5-carboxylate dehydrogenase (546 aa).

279–284 (KDISSN) lines the NAD(+) pocket. The active-site Proton acceptor is glutamate 297. Residue cysteine 331 is the Nucleophile of the active site.

It belongs to the aldehyde dehydrogenase family.

It localises to the cytoplasm. The enzyme catalyses L-glutamate 5-semialdehyde + NAD(+) + H2O = L-glutamate + NADH + 2 H(+). It functions in the pathway amino-acid degradation; L-proline degradation into L-glutamate; L-glutamate from L-proline: step 2/2. The protein is Delta-1-pyrroline-5-carboxylate dehydrogenase (pruA) of Agaricus bisporus (White button mushroom).